The chain runs to 102 residues: Nucleoid-associated protein BCc_301 (102 aa).

Belongs to the YbaB/EbfC family. Homodimer.

It is found in the cytoplasm. It localises to the nucleoid. Binds to DNA and alters its conformation. May be involved in regulation of gene expression, nucleoid organization and DNA protection. This is Nucleoid-associated protein BCc_301 from Buchnera aphidicola subsp. Cinara cedri (strain Cc).